The following is a 321-amino-acid chain: GDP-L-fucose synthase (321 aa).

Residue 14 to 20 (GGSGLVG) coordinates NADP(+). Y143 functions as the Proton donor/acceptor in the catalytic mechanism. Residues K147, 170–173 (PTNV), and H186 contribute to the NADP(+) site. The substrate site is built by K194, W208, R215, and D277.

This sequence belongs to the NAD(P)-dependent epimerase/dehydratase family. Fucose synthase subfamily. Homodimer.

The catalysed reaction is GDP-beta-L-fucose + NADP(+) = GDP-4-dehydro-alpha-D-rhamnose + NADPH + H(+). The protein operates within nucleotide-sugar biosynthesis; GDP-L-fucose biosynthesis via de novo pathway; GDP-L-fucose from GDP-alpha-D-mannose: step 2/2. In terms of biological role, catalyzes the two-step NADP-dependent conversion of GDP-4-dehydro-6-deoxy-D-mannose to GDP-fucose, involving an epimerase and a reductase reaction. The sequence is that of GDP-L-fucose synthase (GFUS) from Pongo abelii (Sumatran orangutan).